A 140-amino-acid polypeptide reads, in one-letter code: UPF0102 protein ACIAD1132 (140 aa).

It belongs to the UPF0102 family.

The sequence is that of UPF0102 protein ACIAD1132 from Acinetobacter baylyi (strain ATCC 33305 / BD413 / ADP1).